The chain runs to 1480 residues: Cystic fibrosis transmembrane conductance regulator (1480 aa).

The Cytoplasmic portion of the chain corresponds to 1–77; sequence MQRSPLEKAS…KLINALRRCF (77 aa). Residues 78–98 form a helical membrane-spanning segment; it reads FWRFMFYGIFLYLGEVTKAVQ. Residues 81–365 enclose the ABC transmembrane type-1 1 domain; it reads FMFYGIFLYL…WAVQTWYDSL (285 aa). Topologically, residues 99 to 122 are extracellular; the sequence is PLLLGRIIASYDPDNKEERSIAIY. A helical membrane pass occupies residues 123-146; sequence LGIGLCLLFIVRTLLLHPAIFGLH. Residues 147-195 lie on the Cytoplasmic side of the membrane; it reads HIGMQMRIAMFSLIYKKTLKLSSRVLDKISIGQLVSLLSNNLNKFDEGL. The chain crosses the membrane as a helical span at residues 196–216; sequence ALAHFVWIAPLQVALLMGLIW. The Extracellular segment spans residues 217-222; it reads ELLQAS. The helical transmembrane segment at 223–243 threads the bilayer; the sequence is AFCGLGFLIVLALFQAGLGRM. Residues 244–298 lie on the Cytoplasmic side of the membrane; sequence MMKYRDQRAGKISERLVITSEMIENIQSVKAYCWEEAMEKMIENLRQTELKLTRK. The helical transmembrane segment at 299-319 threads the bilayer; it reads AAYVRYFNSSAFFFSGFFVVF. Residues 320-339 lie on the Extracellular side of the membrane; the sequence is LSVLPYALIKGIILRKIFTT. A helical transmembrane segment spans residues 340-358; that stretch reads ISFCIVLRMAVTRQFPWAV. The Cytoplasmic segment spans residues 359–858; it reads QTWYDSLGAI…YLRYITVHKS (500 aa). ATP-binding positions include tryptophan 401, serine 434, 458–465, and glutamine 493; that span reads GSTGAGKT. The 224-residue stretch at 423-646 folds into the ABC transporter 1 domain; sequence NGDDSLFFSN…RPDFSSKLMG (224 aa). Cysteine 524 is lipidated: S-palmitoyl cysteine. Phosphoserine is present on residues serine 549 and serine 660. Residues 654–831 are disordered R region; that stretch reads SAERRNSILT…EEINEEDLKE (178 aa). Serine 670 carries the phosphoserine; by PKA modification. Serine 686 is subject to Phosphoserine. A Glycyl lysine isopeptide (Lys-Gly) (interchain with G-Cter in ubiquitin) cross-link involves residue lysine 688. Residues serine 700 and serine 712 each carry the phosphoserine modification. At threonine 717 the chain carries Phosphothreonine. 6 positions are modified to phosphoserine: serine 737, serine 753, serine 768, serine 790, serine 795, and serine 813. The chain crosses the membrane as a helical span at residues 859 to 879; the sequence is LIFVLIWCLVIFLAEVAASLV. The ABC transmembrane type-1 2 domain occupies 859–1155; sequence LIFVLIWCLV…AVNSSIDVDS (297 aa). The Extracellular segment spans residues 880-918; sequence VLWLLGNTPLQDKGNSTHSRNNSYAVIITSTSSYYVFYI. 2 N-linked (GlcNAc...) asparagine glycosylation sites follow: asparagine 894 and asparagine 900. The chain crosses the membrane as a discontinuously helical span at residues 919-939; sequence YVGVADTLLAMGFFRGLPLVH. Residues 940–990 lie on the Cytoplasmic side of the membrane; sequence TLITVSKILHHKMLHSVLQAPMSTLNTLKAGGILNRFSKDIAILDDLLPLT. Residues 991 to 1011 traverse the membrane as a helical segment; that stretch reads IFDFIQLLLIVIGAIAVVAVL. Topologically, residues 1012–1013 are extracellular; it reads QP. A helical membrane pass occupies residues 1014 to 1034; it reads YIFVATVPVIVAFIMLRAYFL. Residues 1035–1095 are Cytoplasmic-facing; sequence QTSQQLKQLE…TANWFLYLST (61 aa). The helical transmembrane segment at 1096-1116 threads the bilayer; the sequence is LRWFQMRIEMIFVIFFIAVTF. Residues 1117 to 1130 are Extracellular-facing; it reads ISILTTGEGEGRVG. The chain crosses the membrane as a helical span at residues 1131 to 1151; the sequence is IILTLAMNIMSTLQWAVNSSI. The Cytoplasmic portion of the chain corresponds to 1152–1480; that stretch reads DVDSLMRSVS…TEEEVQDTRL (329 aa). In terms of domain architecture, ABC transporter 2 spans 1210–1443; the sequence is MTVKDLTAKY…RSLFRQAISP (234 aa). Residues tyrosine 1219 and 1244 to 1251 each bind ATP; that span reads GRTGSGKS. The tract at residues 1386 to 1480 is interaction with GORASP2; the sequence is RTLKQAFADC…TEEEVQDTRL (95 aa). The S-palmitoyl cysteine moiety is linked to residue cysteine 1395. Serine 1444 and serine 1456 each carry phosphoserine. The tract at residues 1452-1480 is disordered; that stretch reads HRNSSKCKSKPQIAALKEETEEEVQDTRL. Residues 1470–1480 are compositionally biased toward acidic residues; the sequence is ETEEEVQDTRL. Residues 1478–1480 carry the PDZ-binding motif; sequence TRL.

The protein belongs to the ABC transporter superfamily. ABCC family. CFTR transporter (TC 3.A.1.202) subfamily. As to quaternary structure, monomer; does not require oligomerization for channel activity. May form oligomers in the membrane. Interacts with SLC26A3, SLC26A6 and NHERF1. Interacts with SHANK2. Interacts with MYO6. Interacts (via C-terminus) with GOPC (via PDZ domain); this promotes CFTR internalization and thereby decreases channel activity. Interacts with SLC4A7 through NHERF1. Found in a complex with MYO5B and RAB11A. Interacts with ANO1. Interacts with SLC26A8. Interacts with AHCYL1; the interaction increases CFTR activity. Interacts with CSE1L. The core-glycosylated form interacts with GORASP2 (via PDZ GRASP-type 1 domain) in respone to ER stress. Interacts with MARCHF2; the interaction leads to CFTR ubiqtuitination and degradation. Interacts with ADGRG2. Post-translationally, N-glycosylated. In terms of processing, phosphorylated; cAMP treatment promotes phosphorylation and activates the channel. Dephosphorylation decreases the ATPase activity (in vitro). Phosphorylation at PKA sites activates the channel. Phosphorylation at PKC sites enhances the response to phosphorylation by PKA. Phosphorylated by AMPK; this inhibits channel activity. Ubiquitinated, leading to its degradation in the lysosome. Deubiquitination by USP10 in early endosomes enhances its endocytic recycling to the cell membrane. Ubiquitinated by RNF185 during ER stress. Ubiquitinated by MARCHF2.

It is found in the apical cell membrane. The protein resides in the early endosome membrane. Its subcellular location is the cell membrane. It localises to the recycling endosome membrane. The protein localises to the endoplasmic reticulum membrane. It is found in the nucleus. The enzyme catalyses ATP + H2O + closed Cl(-) channel = ADP + phosphate + open Cl(-) channel.. It carries out the reaction chloride(in) = chloride(out). It catalyses the reaction hydrogencarbonate(in) = hydrogencarbonate(out). The catalysed reaction is ATP + H2O = ADP + phosphate + H(+). Its function is as follows. Epithelial ion channel that plays an important role in the regulation of epithelial ion and water transport and fluid homeostasis. Mediates the transport of chloride ions across the cell membrane. Possesses an intrinsic ATPase activity and utilizes ATP to gate its channel; the passive flow of anions through the channel is gated by cycles of ATP binding and hydrolysis by the ATP-binding domains. The ion channel is also permeable to HCO(3)(-); selectivity depends on the extracellular chloride concentration. Exerts its function also by modulating the activity of other ion channels and transporters. Contributes to the regulation of the pH and the ion content of the epithelial fluid layer. Modulates the activity of the epithelial sodium channel (ENaC) complex, in part by regulating the cell surface expression of the ENaC complex. May regulate bicarbonate secretion and salvage in epithelial cells by regulating the transporter SLC4A7. Can inhibit the chloride channel activity of ANO1. Plays a role in the chloride and bicarbonate homeostasis during sperm epididymal maturation and capacitation. This Pan troglodytes (Chimpanzee) protein is Cystic fibrosis transmembrane conductance regulator.